The chain runs to 556 residues: (S)-N-methylcanadine 1-hydroxylase CYP82Y1 (556 aa).

The helical transmembrane segment at 18 to 38 (TAVGTLILAFLLTLSPVIIYY) threads the bilayer. C500 serves as a coordination point for heme.

Belongs to the cytochrome P450 family. Heme is required as a cofactor. As to expression, highly expressed in capsules. Expressed is stems.

The protein resides in the membrane. It catalyses the reaction (S)-cis-N-methylcanadine + reduced [NADPH--hemoprotein reductase] + O2 = (S)-1-hydroxy-N-methylcanadine + oxidized [NADPH--hemoprotein reductase] + H2O + H(+). Its pathway is alkaloid biosynthesis. Functionally, cytochrome P450 involved in the biosynthesis of the benzylisoquinoline alkaloid noscapine. Converts (S)-N-methylcanadine to (S)-1-hydroxy-N-methylcanadine. The polypeptide is (S)-N-methylcanadine 1-hydroxylase CYP82Y1 (Papaver somniferum (Opium poppy)).